We begin with the raw amino-acid sequence, 2788 residues long: Multiple epidermal growth factor-like domains protein 8 (2788 aa).

The first 27 residues, 1–27 (MALGGALAAALALAFAVLGPLSHKVLA), serve as a signal peptide directing secretion. Over 28–2590 (GDCKGQRQVL…FFRQDQAHID (2563 aa)) the chain is Extracellular. 6 disulfide bridges follow: C30–C57, C142–C152, C146–C158, C174–C184, C178–C191, and C193–C202. Residues 30–140 (CKGQRQVLRE…LGFNASFRFS (111 aa)) form the CUB 1 domain. An N-linked (GlcNAc...) asparagine glycan is attached at N50. EGF-like domains are found at residues 138 to 168 (RFSLCPGGCQNHGQCKSPGVCVCEPGWGGPD) and 170 to 203 (GLQECSAYCGSHGTCASTLGPCRCEPGFLGRACD). 6 Kelch repeats span residues 241-287 (LLAV…AVAW), 290-338 (FLVL…AGHA), 346-399 (WLYV…FHAP), 402-453 (TLLV…FHTA), 459-511 (YMVV…APPS), and 525-575 (VLLV…SRDP). 3 PSI domains span residues 561–613 (YCSM…SDCQ), 847–899 (ACSS…ALCP), and 900–947 (LCEE…EECP). Residue N1048 is glycosylated (N-linked (GlcNAc...) asparagine). In terms of domain architecture, EGF-like 3; calcium-binding spans 1074–1115 (DVDECRLGLARCHPRATCLNTPLSYECHCQRGYQGDGITHCN). Disulfide bonds link C1078-C1091, C1085-C1100, C1102-C1114, C1163-C1171, C1165-C1179, C1182-C1191, C1194-C1208, C1211-C1224, C1213-C1231, C1233-C1242, C1245-C1259, C1263-C1302, C1336-C1367, C1407-C1421, C1415-C1433, and C1435-C1444. 2 Laminin EGF-like domains span residues 1163–1210 (CGCN…GCRP) and 1211–1261 (CQCN…SCFR). The CUB 2 domain maps to 1263 to 1405 (CGGRALLTNV…WGFNASVGSA (143 aa)). The N-linked (GlcNAc...) asparagine glycan is linked to N1271. Residue T1353 is modified to Phosphothreonine. Residues 1403 to 1445 (GSARCGSGGPGSCPVPQECVPQDGAAGAGLCRCPQGWAGPHCR) enclose the EGF-like 4 domain. Kelch repeat units lie at residues 1522–1570 (TLWM…SFHA), 1580–1626 (AMYL…HTLT), 1632–1678 (SLLL…SAVY), 1684–1734 (SLYV…HASA), 1739–1786 (TMVV…ESVA), and 1795–1840 (RLYI…WCHG). PSI domains follow at residues 1819-1859 (PCRL…PPCS), 1867-1922 (ECRR…NDCR), 2003-2061 (PCHL…ESCS), and 2063-2120 (GCAQ…LSCP). The N-linked (GlcNAc...) asparagine glycan is linked to N2009. Residues 2121 to 2159 (PEDECANGHHDCNETQNCHDQPHGYECSCKTGYTMDNVT) enclose the EGF-like 5 domain. 2 cysteine pairs are disulfide-bonded: C2125-C2138 and C2132-C2147. 2 N-linked (GlcNAc...) asparagine glycosylation sites follow: N2157 and N2172. 4 cysteine pairs are disulfide-bonded: C2196–C2204, C2198–C2213, C2216–C2225, and C2228–C2242. Laminin EGF-like domains follow at residues 2196–2244 (CRCN…TCRP) and 2323–2386 (CQCN…QCYR). Residues 2465–2507 (HTVHIQPPPPPPPPPPPADGVPRVASDLGGLGTGSGSGSPVEP) are disordered. Over residues 2470–2483 (QPPPPPPPPPPPAD) the composition is skewed to pro residues. A helical membrane pass occupies residues 2591–2611 (LFVFFSVFFSCFFLFLSLCVL). Over 2612-2788 (LWKAKQALDQ…SQDNLTSMSL (177 aa)) the chain is Cytoplasmic. Positions 2761–2775 (GGAGGSGHGGGGGRK) are enriched in gly residues. Residues 2761–2788 (GGAGGSGHGGGGGRKGLLSQDNLTSMSL) form a disordered region. The span at 2779–2788 (SQDNLTSMSL) shows a compositional bias: polar residues.

In terms of tissue distribution, expressed in brain.

It is found in the membrane. Functionally, acts as a negative regulator of hedgehog signaling. In Rattus norvegicus (Rat), this protein is Multiple epidermal growth factor-like domains protein 8 (Megf8).